The chain runs to 175 residues: UPF0398 protein SSA_1858 (175 aa).

It belongs to the UPF0398 family.

The chain is UPF0398 protein SSA_1858 from Streptococcus sanguinis (strain SK36).